The chain runs to 157 residues: Phosphopantetheine adenylyltransferase (157 aa).

Residue Ser9 participates in substrate binding. ATP-binding positions include 9 to 10 and His17; that span reads SF. Positions 41, 73, and 87 each coordinate substrate. Residues 88–90, Glu98, and 122–128 contribute to the ATP site; these read GLR and YSFVSSS.

It belongs to the bacterial CoaD family. As to quaternary structure, homohexamer. The cofactor is Mg(2+).

The protein resides in the cytoplasm. The enzyme catalyses (R)-4'-phosphopantetheine + ATP + H(+) = 3'-dephospho-CoA + diphosphate. It participates in cofactor biosynthesis; coenzyme A biosynthesis; CoA from (R)-pantothenate: step 4/5. Its function is as follows. Reversibly transfers an adenylyl group from ATP to 4'-phosphopantetheine, yielding dephospho-CoA (dPCoA) and pyrophosphate. The polypeptide is Phosphopantetheine adenylyltransferase (Mycobacterium marinum (strain ATCC BAA-535 / M)).